The primary structure comprises 399 residues: Elongation factor Tu (399 aa).

The 195-residue stretch at 10–204 folds into the tr-type G domain; the sequence is KPHVNIGTIG…AVDTSIPEPE (195 aa). The G1 stretch occupies residues 19–26; sequence GHVDHGKT. Position 19–26 (19–26) interacts with GTP; sequence GHVDHGKT. T26 is a binding site for Mg(2+). A G2 region spans residues 60-64; the sequence is GITIN. Positions 81–84 are G3; that stretch reads DCPG. GTP-binding positions include 81 to 85 and 136 to 139; these read DCPGH and NKCD. The tract at residues 136 to 139 is G4; the sequence is NKCD. The segment at 174 to 176 is G5; it reads SGL.

Belongs to the TRAFAC class translation factor GTPase superfamily. Classic translation factor GTPase family. EF-Tu/EF-1A subfamily. Monomer.

The protein localises to the cytoplasm. The enzyme catalyses GTP + H2O = GDP + phosphate + H(+). Functionally, GTP hydrolase that promotes the GTP-dependent binding of aminoacyl-tRNA to the A-site of ribosomes during protein biosynthesis. In Prochlorococcus marinus (strain MIT 9303), this protein is Elongation factor Tu.